A 107-amino-acid chain; its full sequence is Large ribosomal subunit protein uL24 (107 aa).

The protein belongs to the universal ribosomal protein uL24 family. Part of the 50S ribosomal subunit.

In terms of biological role, one of two assembly initiator proteins, it binds directly to the 5'-end of the 23S rRNA, where it nucleates assembly of the 50S subunit. Its function is as follows. One of the proteins that surrounds the polypeptide exit tunnel on the outside of the subunit. The protein is Large ribosomal subunit protein uL24 of Mesomycoplasma hyopneumoniae (strain J / ATCC 25934 / NCTC 10110) (Mycoplasma hyopneumoniae).